The sequence spans 217 residues: MKSIVEQELLFREKSVFEDQAIKQGYSRIAGVDEAGRGPLAGPVVAGACILPGGKLFLGIDDSKKLSPKQRRYLYELLLEDPEVTCGVGVVSVERIDEINILEATKEAMVQAIASLRSTPDFLLVDGLFLPHEIPCLKIIKGDSRSVSIAAASIIAKEYRDELMRKLHSEYPEYGFDKHKGYGTVAHLQALKQFGPCVYHRKSFSPVKESIREGICQ.

The 190-residue stretch at 27–216 folds into the RNase H type-2 domain; the sequence is SRIAGVDEAG…VKESIREGIC (190 aa). The a divalent metal cation site is built by Asp-33, Glu-34, and Asp-126.

Belongs to the RNase HII family. The cofactor is Mn(2+). Mg(2+) serves as cofactor.

It localises to the cytoplasm. It catalyses the reaction Endonucleolytic cleavage to 5'-phosphomonoester.. Its function is as follows. Endonuclease that specifically degrades the RNA of RNA-DNA hybrids. This chain is Ribonuclease HII (rnhB), found in Chlamydia muridarum (strain MoPn / Nigg).